The chain runs to 859 residues: MTADLSQHTPMMQQYLGIKAEHPDQLVFYRMGDFYELFFGDAQKAARLLDITLTQRGQSAGKPIPMAGIPYHAAENYLARLVKLGESVAIAEQIGDPALAKGPVERKVVRIVTPGTVSDEALLEERRDNLLCAVFDHNNQYGCASLDLAAGRFLVTQVEGAEQLQALLERWSPAELLISEEHGLPGRWSDRPGTRKRPSWEFDEDAARRQLCQQFQVQDLAGFGEPSPVAVSAAGALLGYAKETQRGELPHITGLTVESFDDAVAMDAATRRNLELTETLDGQEQHTLAWVLDSTKTAMGARLLKRWVHQPLRNRTTLTQRQDQIDALRQGWCFESARDVLNDIGDMERILGRVALRSARPRDLTRLHASLKALPPLIGTLPAADCFCELIERIGQFPNQVELLGTAVIENPPMLIRDGGVIAPGYSEELDELRSISENAGAILVDIETRERERTQLSTLRVKYNRVHGYYIELSRRESDQAPTDYQRRQTLKNAERFITPELKEFEDKALSASSKALALEKRLYEALLEKVAADLHALQRSAAAVAELDVLASLAERAEALNWVLPQLVDDEAIIEIVDGRHPVVEQVLDDAFVPNSLHLDNARRMVIITGPNMGGKSTYMRQTALIALLAHLGSCVPAASARIGSLDRIFTRIGSSDDLAGGRSTFMVEMSETANILNNATAQSLVLMDEIGRGTSTFDGLSLAWAAAEHLARNLKSFTLFATHYFELTQLPEQLPGIYNAHLTASEHDNRIVFLHRVQEGPASRSYGLQVAQLAGVPSSVIHRAGEKLRELEQSKPLAPSATPPSSYAAPSPAAAPAQASLFNEPNAIELALTDLDPDELTPKQALEALYTLKKLT.

612-619 (GPNMGGKS) serves as a coordination point for ATP. The segment at 797–822 (SKPLAPSATPPSSYAAPSPAAAPAQA) is disordered.

Belongs to the DNA mismatch repair MutS family.

Its function is as follows. This protein is involved in the repair of mismatches in DNA. It is possible that it carries out the mismatch recognition step. This protein has a weak ATPase activity. The sequence is that of DNA mismatch repair protein MutS from Alcanivorax borkumensis (strain ATCC 700651 / DSM 11573 / NCIMB 13689 / SK2).